Consider the following 241-residue polypeptide: Glutathione S-transferase omega-1 (241 aa).

N-acetylserine is present on S2. The 80-residue stretch at 22-101 (GQIRVYSMRF…YLDEAYPEKK (80 aa)) folds into the GST N-terminal domain. Catalysis depends on C32, which acts as the Nucleophile. An N6-acetyllysine modification is found at K57. Residues K59, V72, and 85–86 (ES) contribute to the glutathione site. Positions 106 to 228 (DPYEKACQKM…AKTYRDYLSL (123 aa)) constitute a GST C-terminal domain. S129 carries the phosphoserine modification. N6-acetyllysine is present on residues K143, K148, and K152.

The protein belongs to the GST superfamily. Omega family. In terms of assembly, homodimer.

Its subcellular location is the cytoplasm. The protein resides in the cytosol. It catalyses the reaction RX + glutathione = an S-substituted glutathione + a halide anion + H(+). It carries out the reaction L-dehydroascorbate + 2 glutathione = glutathione disulfide + L-ascorbate. The enzyme catalyses methylarsonate + 2 glutathione + H(+) = methylarsonous acid + glutathione disulfide + H2O. Functionally, exhibits glutathione-dependent thiol transferase and dehydroascorbate reductase activities. Has S-(phenacyl)glutathione reductase activity. Also has glutathione S-transferase activity. Participates in the biotransformation of inorganic arsenic and reduces monomethylarsonic acid (MMA) and dimethylarsonic acid. This Rattus norvegicus (Rat) protein is Glutathione S-transferase omega-1 (Gsto1).